The following is a 2434-amino-acid chain: ATP-binding cassette sub-family A member 2 (2434 aa).

A glycan (N-linked (GlcNAc...) asparagine) is linked at asparagine 14. A run of 2 helical transmembrane segments spans residues 22–42 (PWVL…LLGL) and 54–74 (AFYT…QSLC). N-linked (GlcNAc...) asparagine glycans are attached at residues asparagine 89, asparagine 168, and asparagine 173. At glutamine 271 the chain carries N5-methylglutamine. N-linked (GlcNAc...) asparagine glycans are attached at residues asparagine 305, asparagine 368, asparagine 379, asparagine 420, asparagine 432, asparagine 476, asparagine 484, asparagine 494, asparagine 530, asparagine 549, asparagine 590, asparagine 600, and asparagine 628. Over residues 354–369 (RAPAPQAGSPSGPANS) the composition is skewed to low complexity. The segment at 354-396 (RAPAPQAGSPSGPANSTGVGANTGPNTTVEEGTQSPVTPASPD) is disordered. Residues 370 to 396 (TGVGANTGPNTTVEEGTQSPVTPASPD) are compositionally biased toward polar residues. 6 consecutive transmembrane segments (helical) span residues 699–719 (FLFV…VYSV), 750–770 (VAWF…LTAI), 782–802 (VLII…FCFL), 813–833 (ASAC…YVAI), 857–877 (AFGL…GIQW), and 893–913 (LLAV…TWYI). The ABC transporter 1 domain maps to 990 to 1221 (VCVDKLTKVY…YGDGYRLTLV (232 aa)). Residue 1024-1031 (GHNGAGKT) participates in ATP binding. A disordered region spans residues 1225–1246 (AEPGTSQEPGMASSPSGRPQLS). A compositionally biased stretch (polar residues) spans 1228 to 1246 (GTSQEPGMASSPSGRPQLS). At serine 1238 the chain carries Phosphoserine. Asparagine 1247 carries N-linked (GlcNAc...) asparagine glycosylation. Phosphoserine occurs at positions 1327 and 1331. A helical transmembrane segment spans residues 1461–1481 (ILLPAFFVCVAMTVALSVPEI). N-linked (GlcNAc...) asparagine glycosylation is found at asparagine 1496, asparagine 1549, and asparagine 1557. Residues 1587–1606 (NFVPPPPSPAPSDSPLSPDE) form a disordered region. The span at 1589–1598 (VPPPPSPAPS) shows a compositional bias: pro residues. N-linked (GlcNAc...) asparagine glycans are attached at residues asparagine 1613, asparagine 1678, and asparagine 1776. The next 5 membrane-spanning stretches (helical) occupy residues 1793–1813 (VVIA…FVVF), 1842–1862 (VWDM…LFVF), 1873–1893 (FPAV…IMYP), 1906–1926 (VFLI…TFLL), and 1992–2012 (GLVA…MCQY). Residues 2051 to 2286 (VKIENLTKVY…FGDGYMITVR (236 aa)) enclose the ABC transporter 2 domain. Asparagine 2055 carries N-linked (GlcNAc...) asparagine glycosylation. 2088–2095 (GVNGAGKT) provides a ligand contact to ATP. Threonine 2411 bears the Phosphothreonine mark.

The protein belongs to the ABC transporter superfamily. ABCA family. Post-translationally, N-glycosylated. Methylated at Gln-271 by N6AMT1. As to expression, expressed at high levels in brain, at moderate levels in heart, kidney and lung, and at low levels in skeletal muscle, stomach, spleen, colon and pancreas. Not detected in the liver or small intestine. In brain, highly expressed in white matter and detected in oligodendrocytes. Expressed in cerebellum as well as the anterior commissure. Expressed mainly in the white matter but is also scattered in gray matter throughout the whole brain. Expressed in myelinating cells of both ventral and dorsal restricted regions in newborn spinal cord. Expressed in non-myelin-forming as well as in myelin-forming Schwann cells in the sciatic nerve.

The protein resides in the endosome membrane. It localises to the lysosome membrane. Functionally, probable transporter, its natural substrate has not been found yet. May have a role in macrophage lipid metabolism and neural development. May play a role in myelination, perhaps as a transporter for certain kinds of myelin chemical components. May play an important role in gamma-secretase processing of APP and thus in amyloid-beta peptide generation. Regulates esterification of plasma membrane cholesterol by modulation of sphingolipid metabolism. In terms of biological role, probable lipid transporter that modulates cholesterol sequestration in the late endosome/lysosome by regulating the intracellular sphingolipid metabolism, in turn participates in cholesterol homeostasis. May alter the transbilayer distribution of ceramide in the intraluminal membrane lipid bilayer, favoring its retention in the outer leaflet that results in increased acid ceramidase activity in the late endosome/lysosome, facilitating ceramide deacylation to sphingosine leading to the sequestration of free cholesterol in lysosomes. In addition regulates amyloid-beta production either by activating a signaling pathway that regulates amyloid precursor protein transcription through the modulation of sphingolipid metabolism or through its role in gamma-secretase processing of APP. May play a role in myelin formation. In Rattus norvegicus (Rat), this protein is ATP-binding cassette sub-family A member 2.